A 364-amino-acid polypeptide reads, in one-letter code: GTPase Obg (364 aa).

The Obg domain maps to 1-161 (MRFVDEVTIS…KYLRLELKIL (161 aa)). The OBG-type G domain maps to 162–334 (ADAGIIGLPN…LVDAIWKLQS (173 aa)). GTP is bound by residues 168 to 175 (GLPNAGKS), 193 to 197 (FTTLN), 217 to 220 (DIPG), 287 to 290 (NKID), and 315 to 317 (SAE). Mg(2+)-binding residues include Ser175 and Thr195.

Belongs to the TRAFAC class OBG-HflX-like GTPase superfamily. OBG GTPase family. As to quaternary structure, monomer. It depends on Mg(2+) as a cofactor.

It localises to the cytoplasm. Functionally, an essential GTPase which binds GTP, GDP and possibly (p)ppGpp with moderate affinity, with high nucleotide exchange rates and a fairly low GTP hydrolysis rate. Plays a role in control of the cell cycle, stress response, ribosome biogenesis and in those bacteria that undergo differentiation, in morphogenesis control. This chain is GTPase Obg, found in Lawsonia intracellularis (strain PHE/MN1-00).